We begin with the raw amino-acid sequence, 211 residues long: Transcription antitermination protein NusB (211 aa).

This sequence belongs to the NusB family.

Its function is as follows. Involved in transcription antitermination. Required for transcription of ribosomal RNA (rRNA) genes. Binds specifically to the boxA antiterminator sequence of the ribosomal RNA (rrn) operons. This chain is Transcription antitermination protein NusB, found in Trichormus variabilis (strain ATCC 29413 / PCC 7937) (Anabaena variabilis).